A 152-amino-acid polypeptide reads, in one-letter code: D-aminoacyl-tRNA deacylase 1 (152 aa).

Positions 140–141 (GP) match the Gly-cisPro motif, important for rejection of L-amino acids motif.

The protein belongs to the DTD family. Homodimer.

Its subcellular location is the cytoplasm. The enzyme catalyses glycyl-tRNA(Ala) + H2O = tRNA(Ala) + glycine + H(+). It carries out the reaction a D-aminoacyl-tRNA + H2O = a tRNA + a D-alpha-amino acid + H(+). Its function is as follows. An aminoacyl-tRNA editing enzyme that deacylates mischarged D-aminoacyl-tRNAs. Hydrolyzes correctly charged, achiral, glycyl-tRNA(Gly). Deacylates mischarged D.melanogaster and E.coli glycyl-tRNA(Ala), protecting cells against glycine mischarging by AlaRS. Acts via tRNA-based rather than protein-based catalysis; rejects L-amino acids rather than detecting D-amino acids in the active site. By recycling D-aminoacyl-tRNA to D-amino acids and free tRNA molecules, this enzyme counteracts the toxicity associated with the formation of D-aminoacyl-tRNA entities in vivo and helps enforce protein L-homochirality. This chain is D-aminoacyl-tRNA deacylase 1 (dtd1), found in Leishmania major.